We begin with the raw amino-acid sequence, 424 residues long: Dihydroorotase (424 aa).

Residues His-60 and His-62 each coordinate Zn(2+). Residues 62-64 (HFR) and Asn-94 each bind substrate. Zn(2+) contacts are provided by Asp-151, His-178, and His-231. Asn-277 lines the substrate pocket. Residue Asp-304 coordinates Zn(2+). Residue Asp-304 is part of the active site. Substrate is bound at residue His-308.

This sequence belongs to the metallo-dependent hydrolases superfamily. DHOase family. Class I DHOase subfamily. Zn(2+) serves as cofactor.

It carries out the reaction (S)-dihydroorotate + H2O = N-carbamoyl-L-aspartate + H(+). Its pathway is pyrimidine metabolism; UMP biosynthesis via de novo pathway; (S)-dihydroorotate from bicarbonate: step 3/3. Its function is as follows. Catalyzes the reversible cyclization of carbamoyl aspartate to dihydroorotate. This is Dihydroorotase from Clostridium acetobutylicum (strain ATCC 824 / DSM 792 / JCM 1419 / IAM 19013 / LMG 5710 / NBRC 13948 / NRRL B-527 / VKM B-1787 / 2291 / W).